Reading from the N-terminus, the 255-residue chain is Hydroxyacylglutathione hydrolase (255 aa).

Residues H56, H58, D60, H61, H114, D133, and H171 each contribute to the Zn(2+) site.

Belongs to the metallo-beta-lactamase superfamily. Glyoxalase II family. Monomer. The cofactor is Zn(2+).

It catalyses the reaction an S-(2-hydroxyacyl)glutathione + H2O = a 2-hydroxy carboxylate + glutathione + H(+). It functions in the pathway secondary metabolite metabolism; methylglyoxal degradation; (R)-lactate from methylglyoxal: step 2/2. Functionally, thiolesterase that catalyzes the hydrolysis of S-D-lactoyl-glutathione to form glutathione and D-lactic acid. This is Hydroxyacylglutathione hydrolase from Fuscovulum blasticum (Rhodobacter blasticus).